We begin with the raw amino-acid sequence, 413 residues long: Serpin A12 (413 aa).

The first 20 residues, 1–20 (MTRMLDLGLFLAGLLTVKGL), serve as a signal peptide directing secretion. N-linked (GlcNAc...) asparagine glycans are attached at residues N92 and N267. The reactive center loop stretch occupies residues 364–382 (GMEGAAGSGAQTLPMETPR).

Belongs to the serpin family. Forms a stable complex with KLK7. Post-translationally, glycosylation slightly decreases affinity for heparin, but otherwise has no significant effect on KLK7 inhibitory activity or thermal stability of the protein. As to expression, expressed in visceral adipose tissues.

Its subcellular location is the secreted. Its activity is regulated as follows. Inhibition of KLK7 is enhanced by heparin. Adipokine that modulates insulin action by specifically inhibiting its target protease KLK7 in white adipose tissues. This is Serpin A12 (Serpina12) from Mus musculus (Mouse).